The following is a 214-amino-acid chain: Pyrrolidone-carboxylate peptidase (214 aa).

Active-site residues include Glu-80, Cys-143, and His-166.

It belongs to the peptidase C15 family. Homotetramer.

It localises to the cytoplasm. The enzyme catalyses Release of an N-terminal pyroglutamyl group from a polypeptide, the second amino acid generally not being Pro.. Removes 5-oxoproline from various penultimate amino acid residues except L-proline. This chain is Pyrrolidone-carboxylate peptidase, found in Escherichia fergusonii (strain ATCC 35469 / DSM 13698 / CCUG 18766 / IAM 14443 / JCM 21226 / LMG 7866 / NBRC 102419 / NCTC 12128 / CDC 0568-73).